The sequence spans 717 residues: Fatty acid oxidation complex subunit alpha (717 aa).

The tract at residues 1–189 (MIYQSPTIEV…KVGAIDAVVA (189 aa)) is enoyl-CoA hydratase/isomerase. D296 serves as a coordination point for substrate. The interval 311–717 (KKVNSAAVLG…ANNGSYYQQA (407 aa)) is 3-hydroxyacyl-CoA dehydrogenase. NAD(+) is bound by residues M324, D343, 400–402 (VVE), K407, and S429. H450 (for 3-hydroxyacyl-CoA dehydrogenase activity) is an active-site residue. Position 453 (N453) interacts with NAD(+). N500 and Y660 together coordinate substrate.

It in the N-terminal section; belongs to the enoyl-CoA hydratase/isomerase family. The protein in the C-terminal section; belongs to the 3-hydroxyacyl-CoA dehydrogenase family. Heterotetramer of two alpha chains (FadB) and two beta chains (FadA).

It carries out the reaction a (3S)-3-hydroxyacyl-CoA + NAD(+) = a 3-oxoacyl-CoA + NADH + H(+). The catalysed reaction is a (3S)-3-hydroxyacyl-CoA = a (2E)-enoyl-CoA + H2O. The enzyme catalyses a 4-saturated-(3S)-3-hydroxyacyl-CoA = a (3E)-enoyl-CoA + H2O. It catalyses the reaction (3S)-3-hydroxybutanoyl-CoA = (3R)-3-hydroxybutanoyl-CoA. It carries out the reaction a (3Z)-enoyl-CoA = a 4-saturated (2E)-enoyl-CoA. The catalysed reaction is a (3E)-enoyl-CoA = a 4-saturated (2E)-enoyl-CoA. The protein operates within lipid metabolism; fatty acid beta-oxidation. Involved in the aerobic and anaerobic degradation of long-chain fatty acids via beta-oxidation cycle. Catalyzes the formation of 3-oxoacyl-CoA from enoyl-CoA via L-3-hydroxyacyl-CoA. It can also use D-3-hydroxyacyl-CoA and cis-3-enoyl-CoA as substrate. The sequence is that of Fatty acid oxidation complex subunit alpha from Shewanella halifaxensis (strain HAW-EB4).